The chain runs to 437 residues: tRNA-2-methylthio-N(6)-dimethylallyladenosine synthase (437 aa).

The MTTase N-terminal domain maps to 1–115 (MKVYIETMGC…ISQVIHKEKA (115 aa)). Residues C10, C46, C78, C148, C152, and C155 each contribute to the [4Fe-4S] cluster site. Residues 134 to 367 (KKAQIRSLLN…QNRHKEILEE (234 aa)) form the Radical SAM core domain. The region spanning 370-436 (KLEVGKTHVV…KGRLIATAKG (67 aa)) is the TRAM domain.

The protein belongs to the methylthiotransferase family. MiaB subfamily. As to quaternary structure, monomer. [4Fe-4S] cluster serves as cofactor.

It is found in the cytoplasm. The enzyme catalyses N(6)-dimethylallyladenosine(37) in tRNA + (sulfur carrier)-SH + AH2 + 2 S-adenosyl-L-methionine = 2-methylsulfanyl-N(6)-dimethylallyladenosine(37) in tRNA + (sulfur carrier)-H + 5'-deoxyadenosine + L-methionine + A + S-adenosyl-L-homocysteine + 2 H(+). Its function is as follows. Catalyzes the methylthiolation of N6-(dimethylallyl)adenosine (i(6)A), leading to the formation of 2-methylthio-N6-(dimethylallyl)adenosine (ms(2)i(6)A) at position 37 in tRNAs that read codons beginning with uridine. This Helicobacter pylori (strain Shi470) protein is tRNA-2-methylthio-N(6)-dimethylallyladenosine synthase.